The sequence spans 415 residues: Serine hydroxymethyltransferase (415 aa).

Basic and acidic residues predominate over residues 1 to 10 (MERSHIRDVD). Residues 1-21 (MERSHIRDVDPDAADALSSER) form a disordered region. Residues L119 and 123–125 (GHL) each bind (6S)-5,6,7,8-tetrahydrofolate. N6-(pyridoxal phosphate)lysine is present on K228. 353–355 (SAF) lines the (6S)-5,6,7,8-tetrahydrofolate pocket.

It belongs to the SHMT family. Homodimer. Pyridoxal 5'-phosphate serves as cofactor.

It is found in the cytoplasm. It carries out the reaction (6R)-5,10-methylene-5,6,7,8-tetrahydrofolate + glycine + H2O = (6S)-5,6,7,8-tetrahydrofolate + L-serine. Its pathway is one-carbon metabolism; tetrahydrofolate interconversion. The protein operates within amino-acid biosynthesis; glycine biosynthesis; glycine from L-serine: step 1/1. Catalyzes the reversible interconversion of serine and glycine with tetrahydrofolate (THF) serving as the one-carbon carrier. Also exhibits THF-independent aldolase activity toward beta-hydroxyamino acids, producing glycine and aldehydes, via a retro-aldol mechanism. This chain is Serine hydroxymethyltransferase, found in Haloquadratum walsbyi (strain DSM 16790 / HBSQ001).